The following is a 346-amino-acid chain: Probable choline kinase 3 (346 aa).

Arg-71, Gln-207, and Asp-224 together coordinate ATP.

The protein belongs to the choline/ethanolamine kinase family.

It catalyses the reaction choline + ATP = phosphocholine + ADP + H(+). It functions in the pathway phospholipid metabolism; phosphatidylcholine biosynthesis; phosphocholine from choline: step 1/1. Involved in phospholipid biosynthesis. Catalyzes the first step in phosphatidylcholine biosynthesis. The protein is Probable choline kinase 3 of Arabidopsis thaliana (Mouse-ear cress).